The primary structure comprises 564 residues: Ell-associated factor Eaf (564 aa).

Disordered regions lie at residues 179 to 255 (SGPG…MITD) and 270 to 564 (QANI…DDDD). Residues 186 to 205 (ENSTMRVSSKTKVSTGSRRN) show a composition bias toward polar residues. Position 215 is a phosphoserine (S215). Low complexity predominate over residues 274 to 283 (SGSSTGSSSG). Residues 297-309 (GKQRQAHGKRQQI) show a composition bias toward basic residues. Composition is skewed to low complexity over residues 315–329 (PPVQ…QQQP), 343–387 (QQQQ…QQRP), and 409–420 (ASQSVAQAAAVL). Positions 438–453 (DSSDSDSGSDSDDSTE) are enriched in acidic residues. Low complexity-rich tracts occupy residues 463-505 (EQQQ…NQLP), 523-533 (QQPQPQPQQQQ), and 546-564 (NDLL…DDDD).

This sequence belongs to the EAF family.

Its subcellular location is the nucleus. Its function is as follows. Promotes transcriptional elongation by Su(Tpl)/ELL. Essential for development. The polypeptide is Ell-associated factor Eaf (Drosophila pseudoobscura pseudoobscura (Fruit fly)).